The primary structure comprises 150 residues: uncharacterized protein (150 aa).

This is an uncharacterized protein from Streptomyces lincolnensis.